Reading from the N-terminus, the 161-residue chain is uncharacterized protein (161 aa).

The chain crosses the membrane as a helical span at residues 30-50 (GVILFRLLGVILFRLLGVILF).

The protein localises to the membrane. This is an uncharacterized protein from Homo sapiens (Human).